A 778-amino-acid chain; its full sequence is MNKKILETLEFDKVKALFEPHLLTEQGLEQLRQLAPTAKADKIKQAFAEMKEMQALFVEQPHFTILSTKEIAGVCKRLEMGADLNIEEFLLLKRVLLASRELQSFYANLENVSLEELALWFEKLHDFPQLQGNLQAFNDAGFIENFASEELARIRRKIHDSESQVRDVLQDLLKQKAQMLTEGIVASRNGRQVLPVKNTYRNKIAGVVHDISASGNTVYIEPREVVKLSEEIASLRADERYEMLRILQEISERVRPHATEIANDAWIIGHLDLIRAKVRFIQERQAVVPQLSENQEIQLLHVCHPLVKNAVANDVHFGQDLTAIVITGPNTGGKTIMLKTLGLTQVMAQSGLPILADRGSRVGIFEEIFADIGDEQSIEQSLSTFSSHMTNIVDILGKVNQHSLLLLDELGAGTDPQEGAALAMAILEDLRLRQIKTMATTHYPELKAYGIETAFVQNASMEFDTATLRPTYRFMQGVPGRSNAFEIAKRLGLSEVIVGDASQQIDQDNDVNRIIEQLEEQTLESRKRLDNIREVEQENLKMNRALKKLYNELNREKETELNKAREQAAEIVDMALSESDQILKNLHSKSQLKPHEIIEAKAKLKKLAPEKVDLSKNKVLQKAKKKRAPKVGDDIVVLSYGQRGTLTSQLKDGRWEAQVGLIKMTLEEKEFDLVQAQQEKPVKKKQVNVVKRTSGRGPQARLDLRGKRYEEAMNELDIFIDQALLNNMAQVDIIHGIGTGVIREGVTKYLQRNKHVKSFGYAPQNAGGSGATIVTFKG.

328 to 335 (GPNTGGKT) is a binding site for ATP. Residues 702–777 (LDLRGKRYEE…GSGATIVTFK (76 aa)) enclose the Smr domain.

It belongs to the DNA mismatch repair MutS family. MutS2 subfamily. As to quaternary structure, homodimer. Binds to stalled ribosomes, contacting rRNA.

Endonuclease that is involved in the suppression of homologous recombination and thus may have a key role in the control of bacterial genetic diversity. In terms of biological role, acts as a ribosome collision sensor, splitting the ribosome into its 2 subunits. Detects stalled/collided 70S ribosomes which it binds and splits by an ATP-hydrolysis driven conformational change. Acts upstream of the ribosome quality control system (RQC), a ribosome-associated complex that mediates the extraction of incompletely synthesized nascent chains from stalled ribosomes and their subsequent degradation. Probably generates substrates for RQC. The protein is Endonuclease MutS2 of Streptococcus pneumoniae (strain Taiwan19F-14).